Consider the following 477-residue polypeptide: Phosphatidylinositol 4-kinase type 2-beta (477 aa).

Positions 1–80 (MPEPPRDIMA…EDRSISASLS (80 aa)) are disordered. Ser-45 carries the phosphoserine modification. Positions 116–447 (GVFPERISQG…AQMPCVIVEC (332 aa)) constitute a PI3K/PI4K catalytic domain. The segment at 122–128 (ISQGSSG) is G-loop. ATP contacts are provided by Ser-129 and Lys-144. Positions 149–151 (EPY) are important for substrate binding. Residues 157 to 170 (KWTKYVHKVCCPCC) are important for interaction with membranes. ATP contacts are provided by residues 253 to 256 (QLFV) and 267 to 268 (RR). The tract at residues 260-268 (KEAEYWLRR) is important for interaction with membranes. Residues 297–305 (RNTDRGNDN) form a catalytic loop region. Positions 338–358 (AIDNGLAFPFKHPDEWRAYPF) are activation loop. Residue Asp-340 participates in ATP binding. Positions 353-362 (WRAYPFHWAW) are important for interaction with membranes.

It belongs to the PI3/PI4-kinase family. Type II PI4K subfamily.

The protein resides in the cytoplasm. It is found in the cytosol. It localises to the golgi apparatus membrane. The protein localises to the endoplasmic reticulum membrane. Its subcellular location is the cell membrane. The protein resides in the early endosome membrane. The enzyme catalyses a 1,2-diacyl-sn-glycero-3-phospho-(1D-myo-inositol) + ATP = a 1,2-diacyl-sn-glycero-3-phospho-(1D-myo-inositol 4-phosphate) + ADP + H(+). Together with PI4K2A and the type III PI4Ks (PIK4CA and PIK4CB) it contributes to the overall PI4-kinase activity of the cell. This contribution may be especially significant in plasma membrane, endosomal and Golgi compartments. The phosphorylation of phosphatidylinositol (PI) to PI4P is the first committed step in the generation of phosphatidylinositol 4,5-bisphosphate (PIP2), a precursor of the second messenger inositol 1,4,5-trisphosphate (InsP3). Contributes to the production of InsP3 in stimulated cells and is likely to be involved in the regulation of vesicular trafficking. The sequence is that of Phosphatidylinositol 4-kinase type 2-beta (Pi4k2b) from Rattus norvegicus (Rat).